The sequence spans 197 residues: Small ribosomal subunit protein uS10c (197 aa).

The transit peptide at 1–60 (MATSSLSTIVFSPLALSNSSSFPNKPQVSNLSLHSSLSNLRRTLSHSSPSSSSSSNVRVF) directs the protein to the chloroplast. The segment at 67–91 (ESQETGPESYVEEGSETSALGIGAD) is disordered.

Belongs to the universal ribosomal protein uS10 family. Part of the 30S ribosomal subunit.

It localises to the plastid. It is found in the chloroplast. The protein is Small ribosomal subunit protein uS10c (RPS10) of Mesembryanthemum crystallinum (Common ice plant).